The sequence spans 129 residues: Translation initiation factor 5A (129 aa).

At Lys-36 the chain carries Hypusine.

This sequence belongs to the eIF-5A family.

Its subcellular location is the cytoplasm. Functionally, functions by promoting the formation of the first peptide bond. In Picrophilus torridus (strain ATCC 700027 / DSM 9790 / JCM 10055 / NBRC 100828 / KAW 2/3), this protein is Translation initiation factor 5A.